The chain runs to 320 residues: o-succinylbenzoate synthase (320 aa).

The active-site Proton donor is the lysine 133. Mg(2+) contacts are provided by aspartate 161, glutamate 190, and aspartate 213. The active-site Proton acceptor is lysine 235.

Belongs to the mandelate racemase/muconate lactonizing enzyme family. MenC type 1 subfamily. A divalent metal cation serves as cofactor.

The catalysed reaction is (1R,6R)-6-hydroxy-2-succinyl-cyclohexa-2,4-diene-1-carboxylate = 2-succinylbenzoate + H2O. Its pathway is quinol/quinone metabolism; 1,4-dihydroxy-2-naphthoate biosynthesis; 1,4-dihydroxy-2-naphthoate from chorismate: step 4/7. The protein operates within quinol/quinone metabolism; menaquinone biosynthesis. Functionally, converts 2-succinyl-6-hydroxy-2,4-cyclohexadiene-1-carboxylate (SHCHC) to 2-succinylbenzoate (OSB). This is o-succinylbenzoate synthase from Salmonella dublin (strain CT_02021853).